The sequence spans 453 residues: CBL-interacting protein kinase 24 (453 aa).

One can recognise a Protein kinase domain in the interval 18–271 (YEVGRTIGQG…IEQIREDTWF (254 aa)). ATP-binding positions include 24–32 (IGQGTFAKV) and Lys47. The active-site Proton acceptor is Asp141. Residues 159–186 (DFGLSTLAQKGVGLLHTTCGTPNYVAPE) are activation loop. Residues 310–336 (NDGGPLVMNAFEMITLSQGLDLSALFD) form the NAF domain. Residues 343–372 (KRQTRFVSRKPAKTIVATIEVVAETMGLKV) form a PPI region.

The protein belongs to the protein kinase superfamily. CAMK Ser/Thr protein kinase family. SNF1 subfamily. In terms of assembly, interacts with CBL4. Mn(2+) is required as a cofactor.

It carries out the reaction L-seryl-[protein] + ATP = O-phospho-L-seryl-[protein] + ADP + H(+). The catalysed reaction is L-threonyl-[protein] + ATP = O-phospho-L-threonyl-[protein] + ADP + H(+). In terms of biological role, involved in the regulatory pathway for the control of intracellular Na(+) and K(+) homeostasis and salt tolerance. Operates in synergy with CBL4 to activate the plasma membrane Na(+)/H(+) antiporter SOS1. CIPK serine-threonine protein kinases interact with CBL proteins. Binding of a CBL protein to the regulatory NAF domain of CIPK protein lead to the activation of the kinase in a calcium-dependent manner. This Oryza sativa subsp. japonica (Rice) protein is CBL-interacting protein kinase 24 (CIPK24).